The chain runs to 764 residues: 5-methyltetrahydropteroyltriglutamate--homocysteine methyltransferase (764 aa).

Residues Arg-16 to Lys-19 and Lys-112 contribute to the 5-methyltetrahydropteroyltri-L-glutamate site. L-homocysteine is bound by residues Ile-431–Ser-433 and Glu-484. Residues Ile-431–Ser-433 and Glu-484 each bind L-methionine. Residues Arg-515 to Cys-516 and Trp-561 each bind 5-methyltetrahydropteroyltri-L-glutamate. L-homocysteine is bound at residue Asp-599. Asp-599 contacts L-methionine. Glu-605 contributes to the 5-methyltetrahydropteroyltri-L-glutamate binding site. Zn(2+) contacts are provided by His-641, Cys-643, and Glu-665. His-694 (proton donor) is an active-site residue. Cys-726 provides a ligand contact to Zn(2+).

It belongs to the vitamin-B12 independent methionine synthase family. The cofactor is Zn(2+).

It carries out the reaction 5-methyltetrahydropteroyltri-L-glutamate + L-homocysteine = tetrahydropteroyltri-L-glutamate + L-methionine. It participates in amino-acid biosynthesis; L-methionine biosynthesis via de novo pathway; L-methionine from L-homocysteine (MetE route): step 1/1. Functionally, catalyzes the transfer of a methyl group from 5-methyltetrahydrofolate to homocysteine resulting in methionine formation. The sequence is that of 5-methyltetrahydropteroyltriglutamate--homocysteine methyltransferase from Paraburkholderia phytofirmans (strain DSM 17436 / LMG 22146 / PsJN) (Burkholderia phytofirmans).